We begin with the raw amino-acid sequence, 482 residues long: Probable polyamine transporter At1g31820 (482 aa).

Helical transmembrane passes span 36–56 (VSMLPLVFLIFYEVSGGPFGA), 66–86 (LLALLGFVIFPFIWCIPEALI), 94–114 (FPINGGFVVWVSSALGTFWGF), 143–163 (VPALATGLPRVASILILTLLL), 171–191 (LTIVGWTAVFMGVFSMLPFAV), 254–274 (VIFVALSNFLPLLSGTGAIPL), 294–314 (GWLQLWVQAAAATSNMGMFLA), 344–364 (TPLLGILFSASGVLLLSGLSF), 367–387 (IIAAENLLYCGGMILEFIAFV), 406–426 (TVGSILICVPPIVLICLVIVL), and 429–449 (IKVALVSFVMVVIGFLMKPCL).

The protein belongs to the amino acid-polyamine-organocation (APC) superfamily. Polyamine:cation symporter (PHS) (TC 2.A.3.12) family.

The protein resides in the cell membrane. Probable cell membrane polyamine/proton symporter involved in the polyamine uptake in cells. In Arabidopsis thaliana (Mouse-ear cress), this protein is Probable polyamine transporter At1g31820.